Reading from the N-terminus, the 198-residue chain is Protein GrpE (198 aa).

Belongs to the GrpE family. As to quaternary structure, homodimer.

The protein resides in the cytoplasm. Its function is as follows. Participates actively in the response to hyperosmotic and heat shock by preventing the aggregation of stress-denatured proteins, in association with DnaK and GrpE. It is the nucleotide exchange factor for DnaK and may function as a thermosensor. Unfolded proteins bind initially to DnaJ; upon interaction with the DnaJ-bound protein, DnaK hydrolyzes its bound ATP, resulting in the formation of a stable complex. GrpE releases ADP from DnaK; ATP binding to DnaK triggers the release of the substrate protein, thus completing the reaction cycle. Several rounds of ATP-dependent interactions between DnaJ, DnaK and GrpE are required for fully efficient folding. This is Protein GrpE from Actinobacillus pleuropneumoniae serotype 5b (strain L20).